The chain runs to 209 residues: Probable nicotinate-nucleotide adenylyltransferase (209 aa).

The protein belongs to the NadD family.

The enzyme catalyses nicotinate beta-D-ribonucleotide + ATP + H(+) = deamido-NAD(+) + diphosphate. The protein operates within cofactor biosynthesis; NAD(+) biosynthesis; deamido-NAD(+) from nicotinate D-ribonucleotide: step 1/1. Functionally, catalyzes the reversible adenylation of nicotinate mononucleotide (NaMN) to nicotinic acid adenine dinucleotide (NaAD). The protein is Probable nicotinate-nucleotide adenylyltransferase of Hydrogenovibrio crunogenus (strain DSM 25203 / XCL-2) (Thiomicrospira crunogena).